A 789-amino-acid polypeptide reads, in one-letter code: Ent-kaur-16-ene synthase, chloroplastic (789 aa).

Residues aspartate 536, aspartate 540, asparagine 680, serine 684, and glutamate 688 each contribute to the Mg(2+) site. The short motif at 536-540 is the DDXXD motif element; it reads DDFYD.

This sequence belongs to the terpene synthase family. It depends on Mg(2+) as a cofactor. The N-terminus is blocked. As to expression, abundant in most tissues. Present in low amounts in mature cotyledons.

Its subcellular location is the plastid. It is found in the chloroplast. The enzyme catalyses ent-copalyl diphosphate = ent-kaur-16-ene + diphosphate. It participates in plant hormone biosynthesis; gibberellin biosynthesis. In terms of biological role, catalyzes the conversion of ent-copalyl diphosphate to the gibberellin precursor ent-kaur-16-ene. In Cucurbita maxima (Pumpkin), this protein is Ent-kaur-16-ene synthase, chloroplastic.